The chain runs to 183 residues: Tumor necrosis factor ligand superfamily member 4 (183 aa).

Residues 1–23 are Cytoplasmic-facing; the sequence is MERVQPLEENVGNAARPRFERNK. Residues 24 to 50 form a helical; Signal-anchor for type II membrane protein membrane-spanning segment; sequence LLLVASVIQGLGLLLCFTYICLHFSAL. One can recognise a THD domain in the interval 51–173; sequence QVSHRYPRIQ…HVNGGELILI (123 aa). Over 51–183 the chain is Extracellular; that stretch reads QVSHRYPRIQ…HQNPGEFCVL (133 aa). Residues Asn-90, Asn-114, Asn-152, and Asn-157 are each glycosylated (N-linked (GlcNAc...) asparagine). A disulfide bridge links Cys-97 with Cys-181.

It belongs to the tumor necrosis factor family. As to quaternary structure, homotrimer.

The protein resides in the membrane. In terms of biological role, cytokine that binds to TNFRSF4. Co-stimulates T-cell proliferation and cytokine production. This chain is Tumor necrosis factor ligand superfamily member 4 (TNFSF4), found in Homo sapiens (Human).